A 97-amino-acid chain; its full sequence is Secreted LysM effector Mg1LysM (97 aa).

The N-terminal stretch at 1-18 (MQFTALVAALLSVAAVQA) is a signal peptide. The region spanning 37–84 (QQYVARSGDTLTKIAQEIYHDVVGVCDIARANNLADPNRIDAGTPYTI) is the LysM domain. 4 residues coordinate chitin: G44, T48, N74, and I76.

Belongs to the secreted LysM effector family. Forms homodimers in a chitin-independent manner through interactions at the N-termini of Mg1LysM monomers. Homodimers are further polymerized in a chitin-dependent manner.

The protein resides in the secreted. The protein localises to the cell wall. Its function is as follows. Secreted effector that enables the plant pathogenic fungus to manipulate host defenses for successful infection. Binds chitin but not cellulose or xylan. Chitin-induced polymerization of homodimers forms a contiguous Mg1LysM highly oligomeric super-complexe that is anchored to the chitin in the fungal cell wall to prevent hydrolysis by host chitinases. This Zymoseptoria tritici (strain ST99CH_3D7) protein is Secreted LysM effector Mg1LysM.